The sequence spans 712 residues: Effector protein HopM1 (712 aa).

The segment at 22 to 58 (DTVPAQTAHPNAVTAGMNPPLTPDQSGSHATESSSAG) is disordered. Over residues 44–57 (PDQSGSHATESSSA) the composition is skewed to polar residues.

As to quaternary structure, interacts with the chaperone ShcM. Interacts with host plant BIG5/ATMIN7.

The protein localises to the secreted. It is found in the host membrane. Its function is as follows. Involved in the suppression of basal resistance and promotion of disease symptoms in plants. Mediates the ubiquitination and degradation, via the host proteasome, of a low-abundance immunity-associated protein in Arabidopsis thaliana. May be involved in the inhibition of a host vesicle trafficking pathway. This is Effector protein HopM1 (hopM1) from Pseudomonas syringae pv. tomato (strain ATCC BAA-871 / DC3000).